A 421-amino-acid polypeptide reads, in one-letter code: MRRHVVLSIFVFAGIVFAAEEAEKLPKCEHVDPYENLEGWLDLKPLTERKCNHTLKENLTEAESKKSEWGIKSFAFDALSSEKLGPNRNVGKQAHKLCEEEKYDASYSTSVVVIHHNEALSTILRMINGIIEFTPKSLLKEIVLYEDASEEDHVLTKHLEKFAKIKGLEDKLIIKRSEYRQGLIRAKVHASRLATGEVIVFMDSHCEVAERWLEPLLQPIKEDPKSIVLPVVDLINPVSFDYSPSMVAKSGFDWGFTFKWIYLPWEYFETPENNVKPFNSPAMPGGLLAMRKEYFVELGEYDMGMEIWGSENIELSLKAWLCGGRVVVAPCSRVGHVFRMRRPYTSKPGMDTALYNAVRVAKTWLGEYESKFFAVKPRGAKMVFGDLTEPMQVKDRLKCKDMKWFIENVYPELEPKVHDEL.

At 1 to 3 (MRR) the chain is on the cytoplasmic side. Residues 4-24 (HVVLSIFVFAGIVFAAEEAEK) traverse the membrane as a helical; Signal-anchor for type II membrane protein segment. Residues 25-421 (LPKCEHVDPY…ELEPKVHDEL (397 aa)) lie on the Lumenal side of the membrane. N-linked (GlcNAc...) asparagine glycans are attached at residues Asn-52 and Asn-58. 2 disulfides stabilise this stretch: Cys-98–Cys-331 and Cys-322–Cys-399. The catalytic subdomain A stretch occupies residues 106-219 (SYSTSVVVIH…ERWLEPLLQP (114 aa)). Substrate contacts are provided by Asp-147 and Arg-180. A Mn(2+)-binding site is contributed by Asp-203. Ser-204 contacts substrate. Position 205 (His-205) interacts with Mn(2+). The interval 277–339 (PFNSPAMPGG…PCSRVGHVFR (63 aa)) is catalytic subdomain B. Trp-308 provides a ligand contact to substrate. Residue His-336 participates in Mn(2+) binding. Residues Arg-339 and Tyr-344 each contribute to the substrate site. Residues 418–421 (HDEL) carry the Prevents secretion from ER motif.

This sequence belongs to the glycosyltransferase 2 family. GalNAc-T subfamily. Mn(2+) is required as a cofactor.

The protein localises to the golgi apparatus membrane. Its pathway is protein modification; protein glycosylation. In terms of biological role, potential glycopeptide transferase involved in O-linked oligosaccharide biosynthesis. In contrast to other members of the family, it does not act as a peptide transferase that transfers GalNAc onto serine or threonine residue on peptides that have been tested. Some peptide transferase activity is however not excluded, considering that its appropriate peptide substrate may remain unidentified. The polypeptide is Probable N-acetylgalactosaminyltransferase 8 (gly-8) (Caenorhabditis elegans).